The primary structure comprises 256 residues: GTP cyclohydrolase FolE2 (256 aa).

The protein belongs to the GTP cyclohydrolase IV family.

It catalyses the reaction GTP + H2O = 7,8-dihydroneopterin 3'-triphosphate + formate + H(+). The protein operates within cofactor biosynthesis; 7,8-dihydroneopterin triphosphate biosynthesis; 7,8-dihydroneopterin triphosphate from GTP: step 1/1. Converts GTP to 7,8-dihydroneopterin triphosphate. This is GTP cyclohydrolase FolE2 from Maridesulfovibrio salexigens (strain ATCC 14822 / DSM 2638 / NCIMB 8403 / VKM B-1763) (Desulfovibrio salexigens).